Reading from the N-terminus, the 251-residue chain is Chloride intracellular channel protein 5 (251 aa).

The interval 1 to 98 (MTDSATTNGD…EEFLEETLTP (98 aa)) is required for insertion into the membrane. Residues 32–35 (CPFS) carry the G-site motif. A helical transmembrane segment spans residues 34–54 (FSQRLFMILWLKGVVFNVTTV). The 141-residue stretch at 101 to 241 (YPKLAAKHRE…AADSEIELAY (141 aa)) folds into the GST C-terminal domain.

This sequence belongs to the chloride channel CLIC family. Component of a multimeric complex consisting of several cytoskeletal proteins, including actin, ezrin, alpha-actinin, gelsolin, and IQGAP1. Interacts with AKAP9. Interacts with TPRN. TPRN, CLIC5 and PTPQR form concentric rings at the base of stereocilia and may form a complex. Interacts with EZR, MYO6 and RDX; the proteins may work together as a complex to stabilize linkages between the plasma membrane and subjacent actin cytoskeleton at the stereocilium base. In terms of tissue distribution, detected in lung and inner ear. Detected in embryonic cochlea, on microvilli-covered apical surfaces of interdental cells, columnar cells of Kolliker's organ, and on stereocilia of inner and outer hair cells (at protein level). Also detected in the eye, where it localizes to lens fiber cells in the lens epithelium (at protein level).

It localises to the golgi apparatus. It is found in the cytoplasm. Its subcellular location is the cytoskeleton. The protein resides in the microtubule organizing center. The protein localises to the centrosome. It localises to the cell cortex. It is found in the membrane. Its subcellular location is the apical cell membrane. The protein resides in the mitochondrion. The protein localises to the cell projection. It localises to the stereocilium. It catalyses the reaction Na(+)(in) = Na(+)(out). The enzyme catalyses K(+)(in) = K(+)(out). The catalysed reaction is chloride(in) = chloride(out). With respect to regulation, inhibited by F-actin. In terms of biological role, in the soluble state, catalyzes glutaredoxin-like thiol disulfide exchange reactions with reduced glutathione as electron donor. Can insert into membranes and form non-selective ion channels almost equally permeable to Na(+), K(+) and Cl(-). Required for normal hearing. Necessary for the formation of stereocilia in the inner ear and normal development of the organ of Corti. Required for the proper localization of PTPRQ and RDX to the stereocilium base during postnatal maturation of hair bundles. Can insert into membranes and form poorly selective ion channels that may also transport chloride ions. Required for the development and/or maintenance of the proper glomerular endothelial cell and podocyte architecture. Plays a role in formation of the lens suture in the eye, which is important for normal optical properties of the lens. In Mus musculus (Mouse), this protein is Chloride intracellular channel protein 5 (Clic5).